A 260-amino-acid polypeptide reads, in one-letter code: Major prion protein (260 aa).

The signal sequence occupies residues 1–22 (MANLGCWMLVLFVATWSDLGLC). The interaction with GRB2, ERI3 and SYN1 stretch occupies residues 23–237 (KKRPKPGGWN…ESQAYYQRGS (215 aa)). The disordered stretch occupies residues 26 to 112 (PKPGGWNTGG…HNQWNKPSKP (87 aa)). 6 repeat units span residues 51-58 (PQGGGWGQ), 59-66 (PHGGGWGQ), 67-74 (PHGGGWGQ), 75-82 (PHGGGWGQ), 83-90 (PHGGGWGQ), and 91-98 (PHGGGWGQ). Positions 51–98 (PQGGGWGQPHGGGWGQPHGGGWGQPHGGGWGQPHGGGWGQPHGGGWGQ) are 6 X 8 AA tandem repeats of P-H-G-G-G-W-G-Q. Positions 52–102 (QGGGWGQPHGGGWGQPHGGGWGQPHGGGWGQPHGGGWGQPHGGGWGQGGGT) are enriched in gly residues. Residues His68, Gly69, Gly70, His76, Gly77, Gly78, His84, Gly85, Gly86, His92, Gly93, and Gly94 each contribute to the Cu(2+) site. A disulfide bridge connects residues Cys186 and Cys221. N-linked (GlcNAc...) asparagine glycosylation is found at Asn188 and Asn204. The GPI-anchor amidated serine moiety is linked to residue Ser237. Positions 238–260 (SMVLFSSPPVILLISFLIFLIVG) are cleaved as a propeptide — removed in mature form.

This sequence belongs to the prion family. Monomer and homodimer. Has a tendency to aggregate into amyloid fibrils containing a cross-beta spine, formed by a steric zipper of superposed beta-strands. Soluble oligomers may represent an intermediate stage on the path to fibril formation. Copper binding may promote oligomerization. Interacts with GRB2, APP, ERI3/PRNPIP and SYN1. Mislocalized cytosolically exposed PrP interacts with MGRN1; this interaction alters MGRN1 subcellular location and causes lysosomal enlargement. Interacts with KIAA1191.

It is found in the cell membrane. The protein localises to the golgi apparatus. In terms of biological role, its primary physiological function is unclear. Has cytoprotective activity against internal or environmental stresses. May play a role in neuronal development and synaptic plasticity. May be required for neuronal myelin sheath maintenance. May play a role in iron uptake and iron homeostasis. Soluble oligomers are toxic to cultured neuroblastoma cells and induce apoptosis (in vitro). Association with GPC1 (via its heparan sulfate chains) targets PRNP to lipid rafts. Also provides Cu(2+) or Zn(2+) for the ascorbate-mediated GPC1 deaminase degradation of its heparan sulfate side chains. The protein is Major prion protein (PRNP) of Saimiri sciureus (Common squirrel monkey).